The following is a 390-amino-acid chain: Chorismate synthase (390 aa).

Arginine 39 and arginine 45 together coordinate NADP(+). FMN-binding positions include 132–134 (RSS), 253–254 (NA), glycine 298, 313–317 (KPIPT), and arginine 339.

The protein belongs to the chorismate synthase family. Homotetramer. It depends on FMNH2 as a cofactor.

It carries out the reaction 5-O-(1-carboxyvinyl)-3-phosphoshikimate = chorismate + phosphate. It functions in the pathway metabolic intermediate biosynthesis; chorismate biosynthesis; chorismate from D-erythrose 4-phosphate and phosphoenolpyruvate: step 7/7. Functionally, catalyzes the anti-1,4-elimination of the C-3 phosphate and the C-6 proR hydrogen from 5-enolpyruvylshikimate-3-phosphate (EPSP) to yield chorismate, which is the branch point compound that serves as the starting substrate for the three terminal pathways of aromatic amino acid biosynthesis. This reaction introduces a second double bond into the aromatic ring system. In Bacillus pumilus (strain SAFR-032), this protein is Chorismate synthase.